Here is a 467-residue protein sequence, read N- to C-terminus: Receptor-like cytosolic serine/threonine-protein kinase RBK1 (467 aa).

The span at 1 to 24 shows a compositional bias: basic and acidic residues; it reads MAVEDNKNSESKNHQEVELHRNDL. Positions 1 to 73 are disordered; sequence MAVEDNKNSE…PFSNTTKTVS (73 aa). Low complexity predominate over residues 40 to 71; the sequence is SDSDNSSSSCSSCSSDDKSSSTSSPFSNTTKT. At Thr142 the chain carries Phosphothreonine. Residues 153–430 enclose the Protein kinase domain; it reads FNPENMIGKG…LRGEDGPAEL (278 aa). Residues 159-167 and Lys181 contribute to the ATP site; that span reads IGKGGHAEV. Catalysis depends on Asp278, which acts as the Proton acceptor. Residue Ser282 is modified to Phosphoserine. Thr318 carries the phosphothreonine modification. Position 326 is a phosphotyrosine (Tyr326).

Belongs to the protein kinase superfamily. Ser/Thr protein kinase family. As to quaternary structure, interacts with ARAC5 and ARAC10. As to expression, mostly expressed in vasculature, hydathode endothem, leaf mesophyll cells and trichomes.

It localises to the cytoplasm. The protein resides in the endomembrane system. The protein localises to the nucleus. The catalysed reaction is L-seryl-[protein] + ATP = O-phospho-L-seryl-[protein] + ADP + H(+). The enzyme catalyses L-threonyl-[protein] + ATP = O-phospho-L-threonyl-[protein] + ADP + H(+). The chain is Receptor-like cytosolic serine/threonine-protein kinase RBK1 (RBK1) from Arabidopsis thaliana (Mouse-ear cress).